The following is an 88-amino-acid chain: UPF0213 protein EF_2693 (88 aa).

One can recognise a GIY-YIG domain in the interval Lys-5–Gln-82.

Belongs to the UPF0213 family.

The sequence is that of UPF0213 protein EF_2693 from Enterococcus faecalis (strain ATCC 700802 / V583).